Reading from the N-terminus, the 123-residue chain is WAP four-disulfide core domain protein 2 (123 aa).

An N-terminal signal peptide occupies residues 1-28 (MPASRLVPLGAVLLLGLLLLLELPPVTG). 2 consecutive WAP domains span residues 30-71 (GADK…SAIC) and 74-122 (PNEK…VTPN). Cystine bridges form between Cys37/Cys63, Cys46/Cys67, Cys50/Cys62, Cys56/Cys71, Cys81/Cys109, Cys92/Cys113, Cys96/Cys108, and Cys102/Cys118. Asn45 is a glycosylation site (N-linked (GlcNAc...) asparagine).

As to quaternary structure, homotrimer; disulfide-linked. In terms of tissue distribution, epididymis.

It localises to the secreted. In terms of biological role, broad range protease inhibitor. The protein is WAP four-disulfide core domain protein 2 (WFDC2) of Oryctolagus cuniculus (Rabbit).